The sequence spans 287 residues: Uroplakin-3a (287 aa).

An N-terminal signal peptide occupies residues 1–18 (MLLLWALLALGCLRCGWT). Residues 19–207 (VNLQPQLASV…DTWPGRRSGG (189 aa)) are Lumenal-facing. N-linked (GlcNAc...) asparagine glycans are attached at residues N74, N139, and N170. The helical transmembrane segment at 208–235 (MIVITSILGSLPFFLLVGFAGAIILSFV) threads the bilayer. Residues 236 to 287 (DMGSSDGEMTHDSQITQEAVPKTLGTSEPSYSSVNRGPPLDRAEVFSSKLQD) lie on the Cytoplasmic side of the membrane. Residues 243-287 (EMTHDSQITQEAVPKTLGTSEPSYSSVNRGPPLDRAEVFSSKLQD) form a disordered region. Residues 259 to 270 (LGTSEPSYSSVN) show a composition bias toward polar residues.

It belongs to the uroplakin-3 family. In terms of assembly, heterodimer with uroplakin-1B (UPK1B).

It localises to the endoplasmic reticulum membrane. In terms of biological role, component of the asymmetric unit membrane (AUM); a highly specialized biomembrane elaborated by terminally differentiated urothelial cells. May play an important role in AUM-cytoskeleton interaction in terminally differentiated urothelial cells. It also contributes to the formation of urothelial glycocalyx which may play an important role in preventing bacterial adherence. The protein is Uroplakin-3a (Upk3a) of Mus musculus (Mouse).